A 285-amino-acid chain; its full sequence is Bifunctional protein FolD (285 aa).

Residues 169-171 (GRS), Ser194, and Ile235 contribute to the NADP(+) site.

It belongs to the tetrahydrofolate dehydrogenase/cyclohydrolase family. As to quaternary structure, homodimer.

It catalyses the reaction (6R)-5,10-methylene-5,6,7,8-tetrahydrofolate + NADP(+) = (6R)-5,10-methenyltetrahydrofolate + NADPH. It carries out the reaction (6R)-5,10-methenyltetrahydrofolate + H2O = (6R)-10-formyltetrahydrofolate + H(+). Its pathway is one-carbon metabolism; tetrahydrofolate interconversion. In terms of biological role, catalyzes the oxidation of 5,10-methylenetetrahydrofolate to 5,10-methenyltetrahydrofolate and then the hydrolysis of 5,10-methenyltetrahydrofolate to 10-formyltetrahydrofolate. The sequence is that of Bifunctional protein FolD from Microcystis aeruginosa (strain NIES-843 / IAM M-2473).